Here is a 208-residue protein sequence, read N- to C-terminus: MISDIEFAFSECNFQFAYKDLQKINLYIKRILLLNTRFNLISNSNSNFNSILNLHVIDSLLGLPTIKEINPSEILDVGSGSGFPGIVLAIFDTSRKYYLLERSKKKSTFLKMIKLELDLENVKILEYEIEREKKKYEFITIRAFRSMNEYALVLKNLLKNGGLIMAYKGKFDKINLEVNQIKDLFSKIEVKSLNSKLSLDRNLVLLYR.

S-adenosyl-L-methionine-binding positions include Gly-78, Phe-83, 101-103 (ERS), 129-130 (IE), and Arg-142.

It belongs to the methyltransferase superfamily. RNA methyltransferase RsmG family.

It localises to the cytoplasm. Functionally, specifically methylates the N7 position of a guanine in 16S rRNA. The chain is Ribosomal RNA small subunit methyltransferase G from Borrelia garinii subsp. bavariensis (strain ATCC BAA-2496 / DSM 23469 / PBi) (Borreliella bavariensis).